The following is a 287-amino-acid chain: Bifunctional protein FolD (287 aa).

NADP(+) contacts are provided by residues 165–167 (GRS), Ser190, and Ile231.

Belongs to the tetrahydrofolate dehydrogenase/cyclohydrolase family. Homodimer.

It carries out the reaction (6R)-5,10-methylene-5,6,7,8-tetrahydrofolate + NADP(+) = (6R)-5,10-methenyltetrahydrofolate + NADPH. The enzyme catalyses (6R)-5,10-methenyltetrahydrofolate + H2O = (6R)-10-formyltetrahydrofolate + H(+). The protein operates within one-carbon metabolism; tetrahydrofolate interconversion. In terms of biological role, catalyzes the oxidation of 5,10-methylenetetrahydrofolate to 5,10-methenyltetrahydrofolate and then the hydrolysis of 5,10-methenyltetrahydrofolate to 10-formyltetrahydrofolate. In Trichodesmium erythraeum (strain IMS101), this protein is Bifunctional protein FolD.